Consider the following 665-residue polypeptide: Glycine--tRNA ligase beta subunit (665 aa).

It belongs to the class-II aminoacyl-tRNA synthetase family. Tetramer of two alpha and two beta subunits.

The protein resides in the cytoplasm. It carries out the reaction tRNA(Gly) + glycine + ATP = glycyl-tRNA(Gly) + AMP + diphosphate. The protein is Glycine--tRNA ligase beta subunit (glyS) of Rickettsia prowazekii (strain Madrid E).